Here is an 871-residue protein sequence, read N- to C-terminus: Pre-mRNA-processing factor 40 homolog B (871 aa).

WW domains lie at 92–125 (GPPR…KPSV) and 133–166 (LLSQ…RPKD). N6-acetyllysine is present on lysine 148. The disordered stretch occupies residues 171 to 277 (EVLVKQEAAG…RSGLSWSNRE (107 aa)). Lysine 175 is covalently cross-linked (Glycyl lysine isopeptide (Lys-Gly) (interchain with G-Cter in SUMO2)). Positions 182–191 (QQQQLPQTLQ) are enriched in low complexity. Positions 192–211 (PQPPQPQPDPPPVPPGPTPV) are enriched in pro residues. Composition is skewed to low complexity over residues 212–221 (PTGLLEPEPG) and 245–255 (EGPSSSGQHQP). FF domains are found at residues 276–330 (REKA…YKAQ), 340–397 (RLRA…VLFF), 410–470 (RRRN…HIRA), 490–550 (QRKN…YVEE), 554–610 (RFHD…LLEK), and 625–682 (RMRR…FLQV). The interval 690–871 (HLHTKGRKHG…TLLQQLDDHQ (182 aa)) is disordered. Residues 691-711 (LHTKGRKHGRKGKKHHHKRSH) are compositionally biased toward basic residues. Over residues 739-756 (SESGSEPSSSLDSVESGG) the composition is skewed to low complexity. Serine 764 bears the Phosphoserine mark. A compositionally biased stretch (basic residues) spans 777 to 793 (RKAKKPKKKTKKRRHKS). Positions 803 to 824 (EEKAGKESDEKEQEQDKDRELQ) are enriched in basic and acidic residues. A Phosphoserine modification is found at serine 832. Lysine 838 is covalently cross-linked (Glycyl lysine isopeptide (Lys-Gly) (interchain with G-Cter in SUMO2)). Residue serine 852 is modified to Phosphoserine.

The protein belongs to the PRPF40 family. In terms of assembly, interacts with the N-terminus of HD. Expressed in the striatum and cortex of the brain (at protein level). Highly expressed in testis, fetal kidney and fetal brain. Moderately expressed in pancreas, skeletal muscle, placenta, brain and heart. Weakly expressed in colon, ileum, ovary, prostate, spleen, kidney and fetal lung.

Its subcellular location is the nucleus speckle. Functionally, may be involved in pre-mRNA splicing. The polypeptide is Pre-mRNA-processing factor 40 homolog B (PRPF40B) (Homo sapiens (Human)).